The following is a 371-amino-acid chain: Neutral protease 2 homolog MGYG_03465 (371 aa).

The signal sequence occupies residues 1–19 (MQFVAVLAALGALVAPAAA). Positions 20-188 (YPHAPMNETL…SIHARALEKR (169 aa)) are excised as a propeptide. Cystine bridges form between Cys196–Cys267 and Cys274–Cys292. His316 contributes to the Zn(2+) binding site. Glu317 is a catalytic residue. Zn(2+)-binding residues include His320 and Asp331.

The protein belongs to the peptidase M35 family. Zn(2+) serves as cofactor.

The protein localises to the secreted. It catalyses the reaction Preferential cleavage of bonds with hydrophobic residues in P1'. Also 3-Asn-|-Gln-4 and 8-Gly-|-Ser-9 bonds in insulin B chain.. In terms of biological role, secreted metalloproteinase that allows assimilation of proteinaceous substrates. Shows high activities on basic nuclear substrates such as histone and protamine. May be involved in virulence. This is Neutral protease 2 homolog MGYG_03465 from Arthroderma gypseum (strain ATCC MYA-4604 / CBS 118893) (Microsporum gypseum).